The primary structure comprises 1163 residues: Guanylate cyclase 32E (1163 aa).

Positions 1–25 are cleaved as a signal peptide; the sequence is MPGPCASAAAFSCILVLLLLGCQRS. The Extracellular portion of the chain corresponds to 29–469; sequence AAGATVSSMR…LCPRKKLDWR (441 aa). N-linked (GlcNAc...) asparagine glycans are attached at residues asparagine 147, asparagine 206, asparagine 368, and asparagine 390. Residues 470 to 490 traverse the membrane as a helical segment; that stretch reads YLVSGPLCALVVVVAIALLIK. Topologically, residues 491–1163 are cytoplasmic; the sequence is HYRYEQTLAG…RSAPSITFRL (673 aa). The Protein kinase domain maps to 507 to 800; it reads MKDVTVINLG…IRLVRMHLKE (294 aa). The Guanylate cyclase domain maps to 873–1003; that stretch reads TILFSDIVGF…DTVNTASRME (131 aa).

The protein belongs to the adenylyl cyclase class-4/guanylyl cyclase family.

It is found in the membrane. The enzyme catalyses GTP = 3',5'-cyclic GMP + diphosphate. This Drosophila melanogaster (Fruit fly) protein is Guanylate cyclase 32E (Gyc32E).